Reading from the N-terminus, the 449-residue chain is MPNLEELWAYLNDKFREELTPVGYSTWIQTAKPVKLTKDKLEIEVPASLHKAYWEKNLVTKVVEGVYEFAQLEVDPVIMTKDELQPAPATDQRPAVEEDDQNLTFKAKTHLNPKYTFDHFVIGKGNQMAHAAALAVAEAPGTTYNPLFIYGGVGLGKTHLMQAIGNLVLGNNPAANIKYVTSENFANDFINSIQTKQQEQFRQEYRNVDLLLVDDIQFFGDKEATQEEFFHTFNTLYENMKQIVLTSDRLPNEIPKLQERLVSRFNKGLSVDVTPPDLETRIAILRNKADAEDLSIPDDTLSYIAGQIESNVRDLEGALVRVQAFSTMKNEDITTSLAADALKALKLDDRSGQLTIPQILNAVAKYFQLTVQDLKGKKRVKQIVIPRQIAMYLAREMTDNSLPKIGQEIGGKDHTTVIHAHEKIMASMTTDENLKAQVIELRNILKNRG.

The domain I, interacts with DnaA modulators stretch occupies residues 1 to 72 (MPNLEELWAY…VEGVYEFAQL (72 aa)). The interval 72 to 109 (LEVDPVIMTKDELQPAPATDQRPAVEEDDQNLTFKAKT) is domain II. The segment at 110–326 (HLNPKYTFDH…GALVRVQAFS (217 aa)) is domain III, AAA+ region. Residues Gly-154, Gly-156, Lys-157, and Thr-158 each coordinate ATP. Positions 327–449 (TMKNEDITTS…ELRNILKNRG (123 aa)) are domain IV, binds dsDNA.

This sequence belongs to the DnaA family. In terms of assembly, oligomerizes as a right-handed, spiral filament on DNA at oriC.

The protein localises to the cytoplasm. In terms of biological role, plays an essential role in the initiation and regulation of chromosomal replication. ATP-DnaA binds to the origin of replication (oriC) to initiate formation of the DNA replication initiation complex once per cell cycle. Binds the DnaA box (a 9 base pair repeat at the origin) and separates the double-stranded (ds)DNA. Forms a right-handed helical filament on oriC DNA; dsDNA binds to the exterior of the filament while single-stranded (ss)DNA is stabiized in the filament's interior. The ATP-DnaA-oriC complex binds and stabilizes one strand of the AT-rich DNA unwinding element (DUE), permitting loading of DNA polymerase. After initiation quickly degrades to an ADP-DnaA complex that is not apt for DNA replication. Binds acidic phospholipids. The protein is Chromosomal replication initiator protein DnaA of Lacticaseibacillus paracasei (strain ATCC 334 / BCRC 17002 / CCUG 31169 / CIP 107868 / KCTC 3260 / NRRL B-441) (Lactobacillus paracasei).